A 473-amino-acid chain; its full sequence is Photosystem II CP43 reaction center protein (473 aa).

Residues 1-14 (MKTLYSLRRFYPVE) constitute a propeptide that is removed on maturation. Thr15 is modified (N-acetylthreonine). Thr15 is subject to Phosphothreonine. The next 5 helical transmembrane spans lie at 69–93 (LFEV…PHLA), 134–155 (LLGP…KDRN), 178–200 (KALS…RKIT), 255–275 (KPFA…LSYS), and 291–312 (WFNN…ASQA). Position 367 (Glu367) interacts with [CaMn4O5] cluster. Residues 447 to 471 (RARAAAAGFEKGIDRDFEPVLSMTP) form a helical membrane-spanning segment.

The protein belongs to the PsbB/PsbC family. PsbC subfamily. PSII is composed of 1 copy each of membrane proteins PsbA, PsbB, PsbC, PsbD, PsbE, PsbF, PsbH, PsbI, PsbJ, PsbK, PsbL, PsbM, PsbT, PsbX, PsbY, PsbZ, Psb30/Ycf12, at least 3 peripheral proteins of the oxygen-evolving complex and a large number of cofactors. It forms dimeric complexes. The cofactor is Binds multiple chlorophylls and provides some of the ligands for the Ca-4Mn-5O cluster of the oxygen-evolving complex. It may also provide a ligand for a Cl- that is required for oxygen evolution. PSII binds additional chlorophylls, carotenoids and specific lipids..

The protein localises to the plastid. It is found in the chloroplast thylakoid membrane. In terms of biological role, one of the components of the core complex of photosystem II (PSII). It binds chlorophyll and helps catalyze the primary light-induced photochemical processes of PSII. PSII is a light-driven water:plastoquinone oxidoreductase, using light energy to abstract electrons from H(2)O, generating O(2) and a proton gradient subsequently used for ATP formation. The polypeptide is Photosystem II CP43 reaction center protein (Pelargonium hortorum (Common geranium)).